Here is a 442-residue protein sequence, read N- to C-terminus: tRNA-2-methylthio-N(6)-dimethylallyladenosine synthase (442 aa).

The MTTase N-terminal domain occupies 5 to 122 (KKVFIKTLGC…LPEMIKRKQS (118 aa)). Residues Cys-14, Cys-51, Cys-85, Cys-159, Cys-163, and Cys-166 each coordinate [4Fe-4S] cluster. The 234-residue stretch at 145–378 (KAEGAKAYVS…DLLNSNAQII (234 aa)) folds into the Radical SAM core domain. A TRAM domain is found at 380–442 (RQMVGTEQRI…LPNSLRGELI (63 aa)).

Belongs to the methylthiotransferase family. MiaB subfamily. As to quaternary structure, monomer. Requires [4Fe-4S] cluster as cofactor.

It is found in the cytoplasm. It carries out the reaction N(6)-dimethylallyladenosine(37) in tRNA + (sulfur carrier)-SH + AH2 + 2 S-adenosyl-L-methionine = 2-methylsulfanyl-N(6)-dimethylallyladenosine(37) in tRNA + (sulfur carrier)-H + 5'-deoxyadenosine + L-methionine + A + S-adenosyl-L-homocysteine + 2 H(+). Its function is as follows. Catalyzes the methylthiolation of N6-(dimethylallyl)adenosine (i(6)A), leading to the formation of 2-methylthio-N6-(dimethylallyl)adenosine (ms(2)i(6)A) at position 37 in tRNAs that read codons beginning with uridine. The sequence is that of tRNA-2-methylthio-N(6)-dimethylallyladenosine synthase from Francisella philomiragia subsp. philomiragia (strain ATCC 25017 / CCUG 19701 / FSC 153 / O#319-036).